The sequence spans 333 residues: 4-hydroxy-2-oxovalerate aldolase (333 aa).

Residues 3–253 (ILINDSTLRD…NTGIDLYHFL (251 aa)) enclose the Pyruvate carboxyltransferase domain. 11–12 (RD) is a substrate binding site. Mn(2+) is bound at residue D12. H15 acts as the Proton acceptor in catalysis. Substrate contacts are provided by S165 and H192. The Mn(2+) site is built by H192 and H194.

It belongs to the 4-hydroxy-2-oxovalerate aldolase family. As to quaternary structure, interacts with MhpF.

It carries out the reaction (S)-4-hydroxy-2-oxopentanoate = acetaldehyde + pyruvate. Its pathway is aromatic compound metabolism; 3-phenylpropanoate degradation. Its function is as follows. Catalyzes the retro-aldol cleavage of 4-hydroxy-2-oxopentanoate to pyruvate and acetaldehyde. Is involved in the meta-cleavage pathway for the degradation of aromatic compounds. The protein is 4-hydroxy-2-oxovalerate aldolase of Serratia proteamaculans (strain 568).